A 98-amino-acid polypeptide reads, in one-letter code: Small ribosomal subunit protein bS6 (98 aa).

Belongs to the bacterial ribosomal protein bS6 family.

Functionally, binds together with bS18 to 16S ribosomal RNA. This is Small ribosomal subunit protein bS6 from Staphylococcus carnosus (strain TM300).